The primary structure comprises 84 residues: Cell division topological specificity factor (84 aa).

This sequence belongs to the MinE family.

Prevents the cell division inhibition by proteins MinC and MinD at internal division sites while permitting inhibition at polar sites. This ensures cell division at the proper site by restricting the formation of a division septum at the midpoint of the long axis of the cell. The sequence is that of Cell division topological specificity factor from Pseudomonas putida (strain W619).